A 671-amino-acid chain; its full sequence is DNA ligase (671 aa).

Residues 32 to 36 (DAEYD), 81 to 82 (SL), and Glu113 each bind NAD(+). The active-site N6-AMP-lysine intermediate is Lys115. NAD(+) is bound by residues Arg136, Glu173, Lys290, and Lys314. The Zn(2+) site is built by Cys408, Cys411, Cys426, and Cys432. Residues 593–671 (EIDSPFAGKT…EAEMIRLLGA (79 aa)) enclose the BRCT domain.

Belongs to the NAD-dependent DNA ligase family. LigA subfamily. Requires Mg(2+) as cofactor. It depends on Mn(2+) as a cofactor.

The catalysed reaction is NAD(+) + (deoxyribonucleotide)n-3'-hydroxyl + 5'-phospho-(deoxyribonucleotide)m = (deoxyribonucleotide)n+m + AMP + beta-nicotinamide D-nucleotide.. In terms of biological role, DNA ligase that catalyzes the formation of phosphodiester linkages between 5'-phosphoryl and 3'-hydroxyl groups in double-stranded DNA using NAD as a coenzyme and as the energy source for the reaction. It is essential for DNA replication and repair of damaged DNA. This is DNA ligase from Salmonella paratyphi C (strain RKS4594).